The primary structure comprises 473 residues: Benzoyl-CoA oxygenase component B (473 aa).

The protein belongs to the benzoyl-CoA oxygenase component B family. In terms of assembly, monomer. The subunit composition of the active BoxA/BoxB protein complex is not known. Fe cation is required as a cofactor.

The enzyme catalyses benzoyl-CoA + NADPH + O2 + H(+) = 2,3-epoxy-2,3-dihydrobenzoyl-CoA + NADP(+) + H2O. Its function is as follows. The BoxA/BoxB complex catalyzes the aerobic reduction/oxygenation of the aromatic ring of benzoyl-CoA to form 2,3-epoxy-2,3-dihydrobenzoyl-CoA. BoxB acts as the benzoyl-CoA oxygenase, after being reduced by the reductase component BoxA. BoxAB does not act on NADH or benzoate. In Aromatoleum evansii (Azoarcus evansii), this protein is Benzoyl-CoA oxygenase component B (boxB).